The primary structure comprises 339 residues: Glucokinase (339 aa).

16 to 21 serves as a coordination point for ATP; the sequence is GDIGGT.

This sequence belongs to the bacterial glucokinase family.

It is found in the cytoplasm. It carries out the reaction D-glucose + ATP = D-glucose 6-phosphate + ADP + H(+). The polypeptide is Glucokinase (Rhizobium meliloti (strain 1021) (Ensifer meliloti)).